A 559-amino-acid chain; its full sequence is Subtelomeric hrmA-associated cluster protein AFUB_079030 (559 aa).

Disordered regions lie at residues 163 to 190 (AKHP…TKPE), 298 to 351 (RESN…TGMA), 427 to 451 (SITS…HSAS), and 525 to 559 (FRTG…RPHV). Over residues 169–179 (GGKPPAGAPPG) the composition is skewed to low complexity. 2 stretches are compositionally biased toward basic and acidic residues: residues 180 to 189 (KKGDPEKTKP) and 300 to 325 (SNQK…DNAR). Residues 336-346 (NSTSPMSNSAE) are compositionally biased toward polar residues.

Part of the subtelomeric hrmA-associated cluster (HAC) containing genes that alter the hyphal surface (such as reduced total chitin or increased beta-glucan exposure) and perturb inter-hyphal interactions within the developing biofilms, resulting in a loss of vertically aligned polarized growing filaments. Consequently, this hypoxia-typic morphotype (called H-MORPH) with altered biofilm architecture leads to increased hypoxia fitness, increased host inflammation, rapid disease progression, and mortality in a murine model of invasive aspergillosis. The chain is Subtelomeric hrmA-associated cluster protein AFUB_079030 from Aspergillus fumigatus (strain CBS 144.89 / FGSC A1163 / CEA10) (Neosartorya fumigata).